A 231-amino-acid chain; its full sequence is Phosphoheptose isomerase (231 aa).

The region spanning 35 to 190 is the SIS domain; that stretch reads LAAVLGGGGR…CAAFDAALER (156 aa). Residue 50–52 coordinates substrate; that stretch reads NGG. Residues H59 and E63 each coordinate Zn(2+). Substrate is bound by residues E63, 92-93, 118-120, S123, and Q170; these read ND and STS. Zn(2+) contacts are provided by Q170 and H178. 2 stretches are compositionally biased toward low complexity: residues 197 to 206 and 214 to 225; these read AAGSAASTGR and ASTGRAAGAGRA. The disordered stretch occupies residues 197–231; that stretch reads AAGSAASTGRAARRERAASTGRAAGAGRAAQRKRR.

The protein belongs to the SIS family. GmhA subfamily. The cofactor is Zn(2+).

The protein resides in the cytoplasm. It catalyses the reaction 2 D-sedoheptulose 7-phosphate = D-glycero-alpha-D-manno-heptose 7-phosphate + D-glycero-beta-D-manno-heptose 7-phosphate. It functions in the pathway carbohydrate biosynthesis; D-glycero-D-manno-heptose 7-phosphate biosynthesis; D-glycero-alpha-D-manno-heptose 7-phosphate and D-glycero-beta-D-manno-heptose 7-phosphate from sedoheptulose 7-phosphate: step 1/1. In terms of biological role, catalyzes the isomerization of sedoheptulose 7-phosphate in D-glycero-D-manno-heptose 7-phosphate. This chain is Phosphoheptose isomerase, found in Streptomyces coelicolor (strain ATCC BAA-471 / A3(2) / M145).